Here is a 160-residue protein sequence, read N- to C-terminus: Large ribosomal subunit protein eL21 (160 aa).

Basic and acidic residues-rich tracts occupy residues 112–123 (NDQKKKEAKEKG) and 136–146 (REAHFVRTNGK). The interval 112–146 (NDQKKKEAKEKGTWVQLNGQPAPPREAHFVRTNGK) is disordered.

The protein belongs to the eukaryotic ribosomal protein eL21 family. As to quaternary structure, component of the large ribosomal subunit.

The protein localises to the cytoplasm. It is found in the cytosol. It localises to the endoplasmic reticulum. Functionally, component of the large ribosomal subunit. The ribosome is a large ribonucleoprotein complex responsible for the synthesis of proteins in the cell. In Rattus norvegicus (Rat), this protein is Large ribosomal subunit protein eL21 (Rpl21).